We begin with the raw amino-acid sequence, 189 residues long: Potassium-transporting ATPase KdpC subunit (189 aa).

A helical membrane pass occupies residues 6 to 26 (PAIMMVLVFTIICGGIYPAVV).

The protein belongs to the KdpC family. The system is composed of three essential subunits: KdpA, KdpB and KdpC.

The protein localises to the cell inner membrane. In terms of biological role, part of the high-affinity ATP-driven potassium transport (or Kdp) system, which catalyzes the hydrolysis of ATP coupled with the electrogenic transport of potassium into the cytoplasm. This subunit acts as a catalytic chaperone that increases the ATP-binding affinity of the ATP-hydrolyzing subunit KdpB by the formation of a transient KdpB/KdpC/ATP ternary complex. This is Potassium-transporting ATPase KdpC subunit from Geobacter metallireducens (strain ATCC 53774 / DSM 7210 / GS-15).